Here is a 266-residue protein sequence, read N- to C-terminus: uncharacterized protein (266 aa).

A PH domain is found at 35–131; that stretch reads VLVGEGVLVK…WMLHIERCVT (97 aa). An FYVE-type zinc finger spans residues 152 to 212; that stretch reads DGEAVKCMVC…VCDHCFDSLS (61 aa). Zn(2+) contacts are provided by cysteine 158, cysteine 161, cysteine 175, cysteine 178, cysteine 183, cysteine 186, cysteine 204, and cysteine 207. The segment at 213-266 is disordered; it reads SATPGQEESEPKTGNRLHHEDSSSDSEDEVNGSGRSSNESRPTFYREDVQQPAT. 2 stretches are compositionally biased toward basic and acidic residues: residues 221–234 and 256–266; these read SEPKTGNRLHHEDS and FYREDVQQPAT.

This is an uncharacterized protein from Caenorhabditis elegans.